Consider the following 94-residue polypeptide: MGSELESAMETLINVFHAHSGQEGDKYKLSKKELKDLLQTELSGFLDVQKDADAVDKVMKELDENGDGEVDFKEYVVLVAALTVACNNFFWETS.

EF-hand domains follow at residues 13–48 (INVF…FLDV) and 50–85 (KDAD…LTVA). Ca(2+) contacts are provided by Lys-28, Glu-33, Asp-63, Asn-65, Asp-67, Glu-69, and Glu-74. At Cys-86 the chain carries S-nitrosocysteine.

Belongs to the S-100 family. In terms of assembly, dimer of either two alpha chains, or two beta chains, or one alpha and one beta chain. Also forms heterodimers with S100P. Interacts with AGER. Interacts with CAPZA1. Interacts with FKBP4. Interacts with RYR1 and RYR2. Interacts with CACYBP in a calcium-dependent manner. Interacts with PPP5C (via TPR repeats); the interaction is calcium-dependent and modulates PPP5C activity. Interacts with ATP2A2 and PLN in a Ca(2+)-dependent manner. Interacts with mitochondrial F1-ATPase subunits ATP5F1A and ATP5F1B; these interactions increase F1-ATPase activity. Glutathionylated; glutathionylation increases affinity to calcium about 10-fold. Expressed in the cardiac and the skeletal muscles.

It localises to the cytoplasm. Its subcellular location is the sarcoplasmic reticulum. The protein resides in the mitochondrion. Functionally, small calcium binding protein that plays important roles in several biological processes such as Ca(2+) homeostasis, chondrocyte biology and cardiomyocyte regulation. In response to an increase in intracellular Ca(2+) levels, binds calcium which triggers conformational changes. These changes allow interactions with specific target proteins and modulate their activity. Regulates a network in cardiomyocytes controlling sarcoplasmic reticulum Ca(2+) cycling and mitochondrial function through interaction with the ryanodine receptors RYR1 and RYR2, sarcoplasmic reticulum Ca(2+)-ATPase/ATP2A2 and mitochondrial F1-ATPase. Facilitates diastolic Ca(2+) dissociation and myofilament mechanics in order to improve relaxation during diastole. The protein is Protein S100-A1 (S100a1) of Mus musculus (Mouse).